We begin with the raw amino-acid sequence, 248 residues long: Aspartate/glutamate leucyltransferase (248 aa).

The protein belongs to the R-transferase family. Bpt subfamily.

The protein localises to the cytoplasm. It carries out the reaction N-terminal L-glutamyl-[protein] + L-leucyl-tRNA(Leu) = N-terminal L-leucyl-L-glutamyl-[protein] + tRNA(Leu) + H(+). The catalysed reaction is N-terminal L-aspartyl-[protein] + L-leucyl-tRNA(Leu) = N-terminal L-leucyl-L-aspartyl-[protein] + tRNA(Leu) + H(+). Functionally, functions in the N-end rule pathway of protein degradation where it conjugates Leu from its aminoacyl-tRNA to the N-termini of proteins containing an N-terminal aspartate or glutamate. In Methylorubrum extorquens (strain PA1) (Methylobacterium extorquens), this protein is Aspartate/glutamate leucyltransferase.